Consider the following 331-residue polypeptide: Laforin (331 aa).

The CBM20 domain occupies 1–124; it reads MRFRFGVVVP…NNLVDGVYCL (124 aa). The residue at position 25 (Ser-25) is a Phosphoserine; by AMPK. Substrate is bound by residues Trp-32, Lys-87, 103-107, Asp-197, Asp-235, and Arg-241; that span reads GPHHD. Residues 156–323 form the Tyrosine-protein phosphatase domain; sequence HYSRILPNIW…EEDFFQKFGK (168 aa). The active-site Phosphocysteine intermediate is Cys-266. The Glucan phosphatase signature motif CXAGXGR signature appears at 266–272; the sequence is CNAGVGR. Substrate-binding positions include 267 to 272 and Tyr-304; that span reads NAGVGR.

Belongs to the protein-tyrosine phosphatase family. As to quaternary structure, homodimer. Interacts with itself. Interacts with PPP1R3B, PPP1R3C, PPP1R3D, HIRIP5, and EPM2AIP1. Binds glycogen and Lafora bodies. Interacts with NHLRC1/malin (via the NHL repeats). Forms a complex with NHLRC1/malin and HSP70. Interacts with PPP1R3D; in the presence of NHLC1/malin the interaction leads to ubiquitination and autophagic degradation of PPP1R3D. Interacts (via the phosphatase domain) with MAPT/Tau; the interaction dephosphorylates MAPT. Interacts with PRDM8. Polyubiquitinated by NHLRC1/malin. Post-translationally, phosphorylation on Ser-25 by AMPK affects the phosphatase activity of the enzyme and its ability to homodimerize and interact with NHLRC1, PPP1R3C or PRKAA2.

It is found in the cytoplasm. The protein resides in the endoplasmic reticulum membrane. The protein localises to the cell membrane. The catalysed reaction is O-phospho-L-tyrosyl-[protein] + H2O = L-tyrosyl-[protein] + phosphate. It catalyses the reaction O-phospho-L-seryl-[protein] + H2O = L-seryl-[protein] + phosphate. The enzyme catalyses O-phospho-L-threonyl-[protein] + H2O = L-threonyl-[protein] + phosphate. Plays an important role in preventing glycogen hyperphosphorylation and the formation of insoluble aggregates, via its activity as glycogen phosphatase, and by promoting the ubiquitination of proteins involved in glycogen metabolism via its interaction with the E3 ubiquitin ligase NHLRC1/malin. Dephosphorylates phosphotyrosine and synthetic substrates, such as para-nitrophenylphosphate (pNPP), and has low activity with phosphoserine and phosphothreonine substrates (in vitro). Has also been shown to dephosphorylate MAPT. Shows strong phosphatase activity towards complex carbohydrates in vitro, avoiding glycogen hyperphosphorylation which is associated with reduced branching and formation of insoluble aggregates. Forms a complex with NHLRC1/malin and HSP70, which suppresses the cellular toxicity of misfolded proteins by promoting their degradation through the ubiquitin-proteasome system (UPS). Acts as a scaffold protein to facilitate PPP1R3C/PTG ubiquitination by NHLRC1/malin. Also promotes proteasome-independent protein degradation through the macroautophagy pathway. This chain is Laforin (EPM2A), found in Canis lupus familiaris (Dog).